The primary structure comprises 496 residues: Genome polyprotein (496 aa).

The Extracellular portion of the chain corresponds to 1–447 (SRCTHLENRD…HTVLGGAFNS (447 aa)). Cystine bridges form between Cys-3–Cys-30, Cys-60–Cys-116, Cys-60–Cys-121, Cys-74–Cys-105, Cys-92–Cys-116, and Cys-92–Cys-121. The interval 98-111 (DRGWGNHCGLFGKG) is fusion peptide. Asn-154 carries N-linked (GlcNAc...) asparagine; by host glycosylation. Cystine bridges form between Cys-186-Cys-290 and Cys-307-Cys-338. Residues 448–468 (IFGGVGFLPKLLMGVALAWLG) form a helical membrane-spanning segment. At 469-479 (LNTRNPTMSMS) the chain is on the cytoplasmic side. The chain crosses the membrane as a helical span at residues 480–496 (FLLTGGLVLAMTLGVGA).

As to quaternary structure, homodimer; in the endoplasmic reticulum and Golgi. In terms of processing, N-glycosylated.

It is found in the virion membrane. Its subcellular location is the host endoplasmic reticulum membrane. Binds to host cell surface receptor and mediates fusion between viral and cellular membranes. Envelope protein is synthesized in the endoplasmic reticulum in the form of heterodimer with protein prM. They play a role in virion budding in the ER, and the newly formed immature particle is covered with 60 spikes composed of heterodimer between precursor prM and envelope protein E. The virion is transported to the Golgi apparatus where the low pH causes dissociation of PrM-E heterodimers and formation of E homodimers. prM-E cleavage is ineficient, and many virions are only partially matured. These uncleaved prM would play a role in immune evasion. This Bos taurus (Bovine) protein is Genome polyprotein.